A 144-amino-acid polypeptide reads, in one-letter code: NADH dehydrogenase [ubiquinone] 1 alpha subcomplex subunit 13 (144 aa).

Ala-2 is modified (N-acetylalanine). The chain crosses the membrane as a helical span at residues Leu-30 to Met-51.

As to quaternary structure, complex I is composed of 45 different subunits. Interacts with CARD15, but not with CARD4. Interacts with STAT3, but not with STAT1, STAT2 and STAT5A. Interacts with OLFM4.

It localises to the mitochondrion inner membrane. Its subcellular location is the nucleus. Functionally, accessory subunit of the mitochondrial membrane respiratory chain NADH dehydrogenase (Complex I), that is believed not to be involved in catalysis. Complex I functions in the transfer of electrons from NADH to the respiratory chain. The immediate electron acceptor for the enzyme is believed to be ubiquinone. Involved in the interferon/all-trans-retinoic acid (IFN/RA) induced cell death. This apoptotic activity is inhibited by interaction with viral IRF1. Prevents the transactivation of STAT3 target genes. May play a role in CARD15-mediated innate mucosal responses and serve to regulate intestinal epithelial cell responses to microbes. The polypeptide is NADH dehydrogenase [ubiquinone] 1 alpha subcomplex subunit 13 (NDUFA13) (Bos taurus (Bovine)).